A 203-amino-acid polypeptide reads, in one-letter code: GTP cyclohydrolase-2 (203 aa).

49–53 (RIHSE) is a binding site for GTP. Positions 54, 65, and 67 each coordinate Zn(2+). Residues Gln70, 92–94 (EGR), and Thr114 each bind GTP. The active-site Proton acceptor is Asp126. Arg128 acts as the Nucleophile in catalysis. 2 residues coordinate GTP: Thr149 and Lys154.

Belongs to the GTP cyclohydrolase II family. Zn(2+) is required as a cofactor.

It carries out the reaction GTP + 4 H2O = 2,5-diamino-6-hydroxy-4-(5-phosphoribosylamino)-pyrimidine + formate + 2 phosphate + 3 H(+). It participates in cofactor biosynthesis; riboflavin biosynthesis; 5-amino-6-(D-ribitylamino)uracil from GTP: step 1/4. Functionally, catalyzes the conversion of GTP to 2,5-diamino-6-ribosylamino-4(3H)-pyrimidinone 5'-phosphate (DARP), formate and pyrophosphate. In Shewanella oneidensis (strain ATCC 700550 / JCM 31522 / CIP 106686 / LMG 19005 / NCIMB 14063 / MR-1), this protein is GTP cyclohydrolase-2.